The sequence spans 79 residues: Sec-independent protein translocase protein TatA (79 aa).

The chain crosses the membrane as a helical span at residues 1-21; that stretch reads MFSGISIWQLLILLAIVVLLF. Basic and acidic residues-rich tracts occupy residues 44–58 and 66–79; these read MKDGEDEQDHKRLAD and QDAEQKAEQEKDKA. The disordered stretch occupies residues 44–79; the sequence is MKDGEDEQDHKRLADDDQPQNKQDAEQKAEQEKDKA.

Belongs to the TatA/E family. In terms of assembly, the Tat system comprises two distinct complexes: a TatABC complex, containing multiple copies of TatA, TatB and TatC subunits, and a separate TatA complex, containing only TatA subunits. Substrates initially bind to the TatABC complex, which probably triggers association of the separate TatA complex to form the active translocon.

It localises to the cell inner membrane. In terms of biological role, part of the twin-arginine translocation (Tat) system that transports large folded proteins containing a characteristic twin-arginine motif in their signal peptide across membranes. TatA could form the protein-conducting channel of the Tat system. The protein is Sec-independent protein translocase protein TatA of Alcanivorax borkumensis (strain ATCC 700651 / DSM 11573 / NCIMB 13689 / SK2).